We begin with the raw amino-acid sequence, 186 residues long: ADP-ribosylation factor-like protein 8A (186 aa).

Positions 1–19 (MLALFNKLLDWFRALFWKE) form an intramembrane region, note=Mediates targeting to membranes. Residues 29 to 35 (QYSGKTT), 71 to 75 (DIGGQ), and 130 to 133 (NKRD) contribute to the GTP site.

It belongs to the small GTPase superfamily. Arf family.

It is found in the late endosome membrane. The protein localises to the lysosome membrane. Its subcellular location is the cytoplasm. It localises to the cytoskeleton. The protein resides in the spindle. It is found in the cell projection. The protein localises to the axon. Its subcellular location is the synapse. Plays a role in lysosome motility. In neurons, mediates the anterograde axonal long-range transport of presynaptic lysosome-related vesicles required for presynaptic biogenesis and synaptic function. May play a role in chromosome segregation. The protein is ADP-ribosylation factor-like protein 8A (ARL8A) of Gallus gallus (Chicken).